Here is a 126-residue protein sequence, read N- to C-terminus: Small ribosomal subunit protein eS6 (126 aa).

This sequence belongs to the eukaryotic ribosomal protein eS6 family.

This chain is Small ribosomal subunit protein eS6, found in Methanothermobacter thermautotrophicus (strain ATCC 29096 / DSM 1053 / JCM 10044 / NBRC 100330 / Delta H) (Methanobacterium thermoautotrophicum).